We begin with the raw amino-acid sequence, 429 residues long: Adenylosuccinate synthetase (429 aa).

GTP is bound by residues 12–18 (GDEGKGK) and 40–42 (GHT). Asp13 acts as the Proton acceptor in catalysis. Residues Asp13 and Gly40 each coordinate Mg(2+). IMP is bound by residues 13-16 (DEGK), 38-41 (NAGH), Thr128, Arg142, Gln223, Thr238, and Arg302. His41 acts as the Proton donor in catalysis. 298 to 304 (VNTGRKR) serves as a coordination point for substrate. Residues Arg304, 330-332 (KLD), and 412-414 (GVG) each bind GTP.

It belongs to the adenylosuccinate synthetase family. In terms of assembly, homodimer. Mg(2+) serves as cofactor.

Its subcellular location is the cytoplasm. The enzyme catalyses IMP + L-aspartate + GTP = N(6)-(1,2-dicarboxyethyl)-AMP + GDP + phosphate + 2 H(+). The protein operates within purine metabolism; AMP biosynthesis via de novo pathway; AMP from IMP: step 1/2. Functionally, plays an important role in the de novo pathway of purine nucleotide biosynthesis. Catalyzes the first committed step in the biosynthesis of AMP from IMP. This chain is Adenylosuccinate synthetase, found in Corynebacterium glutamicum (strain R).